Reading from the N-terminus, the 275-residue chain is Diaminopimelate epimerase (275 aa).

Residues N12, Q45, and N65 each contribute to the substrate site. Catalysis depends on C74, which acts as the Proton donor. Substrate contacts are provided by residues 75-76, N158, N191, and 209-210; these read GN and ER. C218 (proton acceptor) is an active-site residue. 219-220 provides a ligand contact to substrate; it reads GT.

Belongs to the diaminopimelate epimerase family. Homodimer.

Its subcellular location is the cytoplasm. It catalyses the reaction (2S,6S)-2,6-diaminopimelate = meso-2,6-diaminopimelate. The protein operates within amino-acid biosynthesis; L-lysine biosynthesis via DAP pathway; DL-2,6-diaminopimelate from LL-2,6-diaminopimelate: step 1/1. Its function is as follows. Catalyzes the stereoinversion of LL-2,6-diaminopimelate (L,L-DAP) to meso-diaminopimelate (meso-DAP), a precursor of L-lysine and an essential component of the bacterial peptidoglycan. The polypeptide is Diaminopimelate epimerase (Shewanella oneidensis (strain ATCC 700550 / JCM 31522 / CIP 106686 / LMG 19005 / NCIMB 14063 / MR-1)).